The primary structure comprises 448 residues: Argininosuccinate synthase (448 aa).

Residues 17-25 (AFSGGLDTS) and Ala43 each bind ATP. L-citrulline is bound at residue Tyr99. Gly129 and Thr131 together coordinate ATP. Residues Thr131, Asn135, and Asp136 each coordinate L-aspartate. Asn135 contacts L-citrulline. Asp136 lines the ATP pocket. L-citrulline is bound by residues Arg139 and Ser192. Residue Asp194 participates in ATP binding. The L-citrulline site is built by Thr201, Glu203, and Glu280.

This sequence belongs to the argininosuccinate synthase family. Type 2 subfamily. In terms of assembly, homotetramer.

Its subcellular location is the cytoplasm. The enzyme catalyses L-citrulline + L-aspartate + ATP = 2-(N(omega)-L-arginino)succinate + AMP + diphosphate + H(+). Its pathway is amino-acid biosynthesis; L-arginine biosynthesis; L-arginine from L-ornithine and carbamoyl phosphate: step 2/3. The sequence is that of Argininosuccinate synthase from Pectobacterium carotovorum subsp. carotovorum (strain PC1).